A 937-amino-acid polypeptide reads, in one-letter code: Proprotein convertase subtilisin/kexin type 6 (937 aa).

Over residues 1 to 16 (MPPRAPPAPGPRPPPR) the composition is skewed to pro residues. A disordered region spans residues 1-22 (MPPRAPPAPGPRPPPRAAGRHG). Residues 1-45 (MPPRAPPAPGPRPPPRAAGRHGLSPLAPRPWRWLLLLALPAVCSA) form the signal peptide. A propeptide spanning residues 46-132 (LPPPRPVYTN…QQEVKRRVKR (87 aa)) is cleaved from the precursor. Residues 149 to 468 (MWYMHCADKN…FGLVDAEALV (320 aa)) form the Peptidase S8 domain. Residues Asp-186 and His-227 each act as charge relay system in the active site. N-linked (GlcNAc...) asparagine glycosylation occurs at Asn-240. Ser-401 serves as the catalytic Charge relay system. A P/Homo B domain is found at 476–616 (AVPSQHMCVA…SLILYGTAEH (141 aa)). The Cell attachment site signature appears at 534–536 (RGD). Positions 621–656 (FSSHQSRSRMLELSVPEQEPLKAEGPPPQAETPEEE) are disordered. 5 FU repeats span residues 660 to 707 (TGVC…GYFG), 711 to 758 (ARRC…GLYA), 762 to 806 (QRLC…GTYF), 810 to 855 (LIRC…GFYP), and 863 to 911 (HKVC…ETFC). The CRM (Cys-rich motif) stretch occupies residues 680-898 (CLNCVHFSLG…GFTQLGTSCI (219 aa)). N-linked (GlcNAc...) asparagine glycosylation is found at Asn-882 and Asn-900. Residues 899–937 (TNHTCSNADETFCEMVKSNRLCERKLFIQFCCRTCLLAG) form the PLAC domain.

It belongs to the peptidase S8 family. In terms of assembly, the precursor protein seems to exist in the reticulum endoplasmic as both a monomer and a dimer-sized complex whereas mature form exists only as a monomer, suggesting that propeptide cleavage affects its tertiary or quaternary structure. Interacts (immature form including the propeptide) with RCN3; probably involved in the maturation and the secretion of PCSK6. Ca(2+) serves as cofactor. As to expression, high expression in the anterior pituitary and in several brain regions, the atrium, and the ventricle.

Functionally, serine endoprotease that processes various proproteins by cleavage at paired basic amino acids, recognizing the RXXX[KR]R consensus motif. Likely functions in the constitutive secretory pathway, with unique restricted distribution in both neuroendocrine and non-neuroendocrine tissues. The sequence is that of Proprotein convertase subtilisin/kexin type 6 (Pcsk6) from Rattus norvegicus (Rat).